We begin with the raw amino-acid sequence, 570 residues long: Sulfite reductase [NADPH] hemoprotein beta-component (570 aa).

[4Fe-4S] cluster-binding residues include cysteine 434, cysteine 440, cysteine 479, and cysteine 483. A siroheme-binding site is contributed by cysteine 483.

Belongs to the nitrite and sulfite reductase 4Fe-4S domain family. As to quaternary structure, alpha(8)-beta(8). The alpha component is a flavoprotein, the beta component is a hemoprotein. Siroheme serves as cofactor. Requires [4Fe-4S] cluster as cofactor.

It catalyses the reaction hydrogen sulfide + 3 NADP(+) + 3 H2O = sulfite + 3 NADPH + 4 H(+). The protein operates within sulfur metabolism; hydrogen sulfide biosynthesis; hydrogen sulfide from sulfite (NADPH route): step 1/1. Its function is as follows. Component of the sulfite reductase complex that catalyzes the 6-electron reduction of sulfite to sulfide. This is one of several activities required for the biosynthesis of L-cysteine from sulfate. This is Sulfite reductase [NADPH] hemoprotein beta-component from Shigella flexneri.